The sequence spans 253 residues: Uracil-DNA glycosylase (253 aa).

Asp79 (proton acceptor) is an active-site residue.

It belongs to the uracil-DNA glycosylase (UDG) superfamily. UNG family.

It is found in the cytoplasm. The enzyme catalyses Hydrolyzes single-stranded DNA or mismatched double-stranded DNA and polynucleotides, releasing free uracil.. Its function is as follows. Excises uracil residues from the DNA which can arise as a result of misincorporation of dUMP residues by DNA polymerase or due to deamination of cytosine. The polypeptide is Uracil-DNA glycosylase (Xylella fastidiosa (strain 9a5c)).